Consider the following 558-residue polypeptide: MLQTSSSSATASLQQQLSKQYANSFSNDGSSFSSKNNQQYSEIVNYISFNQDASCITIGLKNGYKIFNCQPNFGRSFQFKNDESTGIVEMLYCTSLLATVAQGEEIGSSPRKLKIINTKTKSTICDLIFPSTILQVKLTNTRLIVVLEDQIYLYDITTMKLLHTIETSPNLSGLSAISYDDSNSYLAYPSPPKTITHDSLLASGINTNGGSNSTQNNISSVSNTPNRVGDVIIFNLTSLQPISVIEAHKSTIASMAFSNNGLYLATASDKGTIVRIFEVATGTKLYQFRRGTYPTKIYSLRFSADDKYVLATSSSLTVHIFRLGEEEALETKHKKKKIPAVATILEEETEGSQSNEQTKSIKRNSEEFEDIRDDGDDSDVDDEDGDIDDESLEVIPAKQRKLSQGSTNSYTSVNSEDVQSNSPKTEPLIDQNRLSMARIIRRSSQTLGRKAAQKMGDFLPSRFSSILEPTRNFASLKINAHSKDTKSVAVMNNVLQQDLIPQTYLASDNASAKQDFMEVSLFHIYVVTTEGMLYTYGLDPERGGDCILLNSHCILDEY.

2 WD repeats span residues 247–287 and 292–331; these read AHKS…KLYQ and TYPT…ALET. Positions 288 to 292 match the L/FRRG motif motif; it reads FRRGT. Positions 344-426 are disordered; that stretch reads ILEEETEGSQ…DVQSNSPKTE (83 aa). Residues 367-392 are compositionally biased toward acidic residues; the sequence is EFEDIRDDGDDSDVDDEDGDIDDESL. Polar residues predominate over residues 402–424; that stretch reads LSQGSTNSYTSVNSEDVQSNSPK.

This sequence belongs to the WD repeat PROPPIN family. In terms of assembly, component of the PI(3,5)P2 regulatory complex.

Its subcellular location is the preautophagosomal structure membrane. It is found in the vacuole membrane. The protein localises to the endosome membrane. Its function is as follows. The PI(3,5)P2 regulatory complex regulates both the synthesis and turnover of phosphatidylinositol 3,5-bisphosphate (PtdIns(3,5)P2). Necessary for proper vacuole morphology. Plays an important role in osmotically-induced vacuole fragmentation. Required for cytoplasm to vacuole transport (Cvt) vesicle formation, pexophagy and starvation-induced autophagy. Involved in correct ATG9 trafficking to the pre-autophagosomal structure. Might also be involved in premeiotic DNA replication. The protein is Autophagy-related protein 18 (ATG18) of Candida albicans (strain SC5314 / ATCC MYA-2876) (Yeast).